We begin with the raw amino-acid sequence, 204 residues long: Recombination protein RecR (204 aa).

Residues 61-76 (CARCNTFSETQICSTC) form a C4-type zinc finger. Residues 84 to 183 (SLLCIVETPA…KVTRIARGIP (100 aa)) enclose the Toprim domain.

It belongs to the RecR family.

Its function is as follows. May play a role in DNA repair. It seems to be involved in an RecBC-independent recombinational process of DNA repair. It may act with RecF and RecO. The chain is Recombination protein RecR from Polynucleobacter asymbioticus (strain DSM 18221 / CIP 109841 / QLW-P1DMWA-1) (Polynucleobacter necessarius subsp. asymbioticus).